Here is a 313-residue protein sequence, read N- to C-terminus: DNA-directed RNA polymerase subunit alpha (313 aa).

An alpha N-terminal domain (alpha-NTD) region spans residues 1-229 (MNSSNLLMEC…NLFKSIGEQK (229 aa)). Positions 243 to 313 (IKPIDPYTHI…LKNKLGIVLK (71 aa)) are alpha C-terminal domain (alpha-CTD).

It belongs to the RNA polymerase alpha chain family. In terms of assembly, in plastids the minimal PEP RNA polymerase catalytic core is composed of four subunits: alpha, beta, beta', and beta''. When a (nuclear-encoded) sigma factor is associated with the core the holoenzyme is formed, which can initiate transcription.

The protein resides in the plastid. It localises to the chloroplast. It carries out the reaction RNA(n) + a ribonucleoside 5'-triphosphate = RNA(n+1) + diphosphate. DNA-dependent RNA polymerase catalyzes the transcription of DNA into RNA using the four ribonucleoside triphosphates as substrates. This Thalassiosira pseudonana (Marine diatom) protein is DNA-directed RNA polymerase subunit alpha.